A 197-amino-acid chain; its full sequence is Ycf20-like protein (197 aa).

Transmembrane regions (helical) follow at residues 113–133 (MKIF…TILG), 138–158 (WDVL…MLMY), and 173–193 (FVVF…VDAF).

The protein belongs to the ycf20 family.

The protein localises to the membrane. This Arabidopsis thaliana (Mouse-ear cress) protein is Ycf20-like protein.